A 316-amino-acid chain; its full sequence is Ribosomal protein L11 methyltransferase (316 aa).

Positions 157, 178, 200, and 243 each coordinate S-adenosyl-L-methionine.

The protein belongs to the methyltransferase superfamily. PrmA family.

Its subcellular location is the cytoplasm. It catalyses the reaction L-lysyl-[protein] + 3 S-adenosyl-L-methionine = N(6),N(6),N(6)-trimethyl-L-lysyl-[protein] + 3 S-adenosyl-L-homocysteine + 3 H(+). In terms of biological role, methylates ribosomal protein L11. The sequence is that of Ribosomal protein L11 methyltransferase from Streptococcus pneumoniae serotype 4 (strain ATCC BAA-334 / TIGR4).